Here is a 147-residue protein sequence, read N- to C-terminus: Small ribosomal subunit protein bS6 (147 aa).

A disordered region spans residues alanine 103 to glutamate 147. Positions glycine 133–glutamate 147 are enriched in acidic residues.

Belongs to the bacterial ribosomal protein bS6 family.

Functionally, binds together with bS18 to 16S ribosomal RNA. The chain is Small ribosomal subunit protein bS6 from Syntrophobacter fumaroxidans (strain DSM 10017 / MPOB).